The sequence spans 306 residues: Recombination-associated protein RdgC (306 aa).

It belongs to the RdgC family.

The protein localises to the cytoplasm. Its subcellular location is the nucleoid. Its function is as follows. May be involved in recombination. This chain is Recombination-associated protein RdgC, found in Burkholderia ambifaria (strain MC40-6).